A 179-amino-acid chain; its full sequence is Large ribosomal subunit protein uL5 (179 aa).

The protein belongs to the universal ribosomal protein uL5 family. In terms of assembly, part of the 50S ribosomal subunit; part of the 5S rRNA/L5/L18/L25 subcomplex. Contacts the 5S rRNA and the P site tRNA. Forms a bridge to the 30S subunit in the 70S ribosome.

Its function is as follows. This is one of the proteins that bind and probably mediate the attachment of the 5S RNA into the large ribosomal subunit, where it forms part of the central protuberance. In the 70S ribosome it contacts protein S13 of the 30S subunit (bridge B1b), connecting the 2 subunits; this bridge is implicated in subunit movement. Contacts the P site tRNA; the 5S rRNA and some of its associated proteins might help stabilize positioning of ribosome-bound tRNAs. In Shewanella woodyi (strain ATCC 51908 / MS32), this protein is Large ribosomal subunit protein uL5.